Reading from the N-terminus, the 206-residue chain is Ribosomal RNA small subunit methyltransferase G (206 aa).

S-adenosyl-L-methionine contacts are provided by residues Gly-74, Leu-79, Val-125–Glu-126, and Arg-140.

This sequence belongs to the methyltransferase superfamily. RNA methyltransferase RsmG family.

The protein resides in the cytoplasm. It catalyses the reaction guanosine(527) in 16S rRNA + S-adenosyl-L-methionine = N(7)-methylguanosine(527) in 16S rRNA + S-adenosyl-L-homocysteine. Functionally, specifically methylates the N7 position of guanine in position 527 of 16S rRNA. This Shewanella putrefaciens (strain CN-32 / ATCC BAA-453) protein is Ribosomal RNA small subunit methyltransferase G.